Here is a 179-residue protein sequence, read N- to C-terminus: Sperm surface protein Sp17 (179 aa).

Residues 72–109 are compositionally biased toward basic and acidic residues; that stretch reads HAFKDEPPEKSETQKIQPEKVAIEKETMPQETVKEKET. 2 disordered regions span residues 72 to 138 and 159 to 179; these read HAFK…EGLL and TRKEYLKKRDSTDETADENNE. Residues 116 to 135 are compositionally biased toward acidic residues; the sequence is EPTEEPQKEEEEEEDEEDLE. An IQ domain is found at 143–172; sequence MQDAAVKIQAVFRGHKTRKEYLKKRDSTDE. Over residues 161-170 the composition is skewed to basic and acidic residues; it reads KEYLKKRDST.

In terms of assembly, homodimer. May interact with ROPN1. As to expression, testis- and sperm-specific.

The protein resides in the membrane. Functionally, sperm surface zona pellucida binding protein. Helps to bind spermatozoa to the zona pellucida with high affinity. Might function in binding zona pellucida and carbohydrates. This chain is Sperm surface protein Sp17 (SPA17), found in Monodelphis domestica (Gray short-tailed opossum).